We begin with the raw amino-acid sequence, 259 residues long: Phosphatidylglycerol--prolipoprotein diacylglyceryl transferase (259 aa).

4 consecutive transmembrane segments (helical) span residues 9–29 (IIFSIGPLAISWYSLSYVIGI), 55–75 (FITYAVIGIIVGGRLGFVLLY), 92–112 (EGGMSFHGGALGGIIAAYLFC), and 117–137 (INFLSLTDIIAPVVPIGLFLG). Arg138 provides a ligand contact to a 1,2-diacyl-sn-glycero-3-phospho-(1'-sn-glycerol). 3 helical membrane passes run 172 to 192 (QLYEAFFEGLVLFSILAYTTF), 201 to 221 (GLNSGIFFTFYGLFRITIEIF), and 228 to 248 (IGFILDSLTMGQILSVPMLLL).

This sequence belongs to the Lgt family.

It is found in the cell inner membrane. The enzyme catalyses L-cysteinyl-[prolipoprotein] + a 1,2-diacyl-sn-glycero-3-phospho-(1'-sn-glycerol) = an S-1,2-diacyl-sn-glyceryl-L-cysteinyl-[prolipoprotein] + sn-glycerol 1-phosphate + H(+). The protein operates within protein modification; lipoprotein biosynthesis (diacylglyceryl transfer). Catalyzes the transfer of the diacylglyceryl group from phosphatidylglycerol to the sulfhydryl group of the N-terminal cysteine of a prolipoprotein, the first step in the formation of mature lipoproteins. The protein is Phosphatidylglycerol--prolipoprotein diacylglyceryl transferase of Rickettsia conorii (strain ATCC VR-613 / Malish 7).